Here is a 510-residue protein sequence, read N- to C-terminus: Light-independent protochlorophyllide reductase subunit B (510 aa).

Asp36 is a binding site for [4Fe-4S] cluster. The active-site Proton donor is Asp296. Residue 431 to 432 (GM) coordinates substrate.

It belongs to the ChlB/BchB/BchZ family. In terms of assembly, protochlorophyllide reductase is composed of three subunits; ChlL, ChlN and ChlB. Forms a heterotetramer of two ChlB and two ChlN subunits. Requires [4Fe-4S] cluster as cofactor.

It localises to the plastid. The protein resides in the chloroplast. It carries out the reaction chlorophyllide a + oxidized 2[4Fe-4S]-[ferredoxin] + 2 ADP + 2 phosphate = protochlorophyllide a + reduced 2[4Fe-4S]-[ferredoxin] + 2 ATP + 2 H2O. It participates in porphyrin-containing compound metabolism; chlorophyll biosynthesis (light-independent). Functionally, component of the dark-operative protochlorophyllide reductase (DPOR) that uses Mg-ATP and reduced ferredoxin to reduce ring D of protochlorophyllide (Pchlide) to form chlorophyllide a (Chlide). This reaction is light-independent. The NB-protein (ChlN-ChlB) is the catalytic component of the complex. This Stigeoclonium helveticum (Green alga) protein is Light-independent protochlorophyllide reductase subunit B.